The primary structure comprises 301 residues: Homoserine O-acetyltransferase (301 aa).

Cysteine 142 functions as the Acyl-thioester intermediate in the catalytic mechanism. Residues lysine 163 and serine 192 each contribute to the substrate site. Histidine 235 functions as the Proton acceptor in the catalytic mechanism. Glutamate 237 is a catalytic residue. Substrate is bound at residue arginine 249.

It belongs to the MetA family.

It is found in the cytoplasm. The enzyme catalyses L-homoserine + acetyl-CoA = O-acetyl-L-homoserine + CoA. The protein operates within amino-acid biosynthesis; L-methionine biosynthesis via de novo pathway; O-acetyl-L-homoserine from L-homoserine: step 1/1. Transfers an acetyl group from acetyl-CoA to L-homoserine, forming acetyl-L-homoserine. This Clostridium acetobutylicum (strain ATCC 824 / DSM 792 / JCM 1419 / IAM 19013 / LMG 5710 / NBRC 13948 / NRRL B-527 / VKM B-1787 / 2291 / W) protein is Homoserine O-acetyltransferase.